Here is a 183-residue protein sequence, read N- to C-terminus: UPF0200 protein Memar_1556 (183 aa).

8 to 15 (GMPASGKG) lines the ATP pocket.

The protein belongs to the UPF0200 family.

The chain is UPF0200 protein Memar_1556 from Methanoculleus marisnigri (strain ATCC 35101 / DSM 1498 / JR1).